The sequence spans 352 residues: S-adenosylmethionine:tRNA ribosyltransferase-isomerase (352 aa).

Belongs to the QueA family. As to quaternary structure, monomer.

The protein localises to the cytoplasm. The catalysed reaction is 7-aminomethyl-7-carbaguanosine(34) in tRNA + S-adenosyl-L-methionine = epoxyqueuosine(34) in tRNA + adenine + L-methionine + 2 H(+). Its pathway is tRNA modification; tRNA-queuosine biosynthesis. Functionally, transfers and isomerizes the ribose moiety from AdoMet to the 7-aminomethyl group of 7-deazaguanine (preQ1-tRNA) to give epoxyqueuosine (oQ-tRNA). This is S-adenosylmethionine:tRNA ribosyltransferase-isomerase from Paraburkholderia phytofirmans (strain DSM 17436 / LMG 22146 / PsJN) (Burkholderia phytofirmans).